Reading from the N-terminus, the 264-residue chain is S-adenosylmethionine decarboxylase proenzyme (264 aa).

Residue Ser-112 is the Schiff-base intermediate with substrate; via pyruvic acid of the active site. Pyruvic acid (Ser); by autocatalysis is present on Ser-112. Catalysis depends on His-117, which acts as the Proton acceptor; for processing activity. Cys-140 (proton donor; for catalytic activity) is an active-site residue.

This sequence belongs to the prokaryotic AdoMetDC family. Type 2 subfamily. In terms of assembly, heterooctamer of four alpha and four beta chains arranged as a tetramer of alpha/beta heterodimers. Requires pyruvate as cofactor. Post-translationally, is synthesized initially as an inactive proenzyme. Formation of the active enzyme involves a self-maturation process in which the active site pyruvoyl group is generated from an internal serine residue via an autocatalytic post-translational modification. Two non-identical subunits are generated from the proenzyme in this reaction, and the pyruvate is formed at the N-terminus of the alpha chain, which is derived from the carboxyl end of the proenzyme. The post-translation cleavage follows an unusual pathway, termed non-hydrolytic serinolysis, in which the side chain hydroxyl group of the serine supplies its oxygen atom to form the C-terminus of the beta chain, while the remainder of the serine residue undergoes an oxidative deamination to produce ammonia and the pyruvoyl group blocking the N-terminus of the alpha chain.

It carries out the reaction S-adenosyl-L-methionine + H(+) = S-adenosyl 3-(methylsulfanyl)propylamine + CO2. It participates in amine and polyamine biosynthesis; S-adenosylmethioninamine biosynthesis; S-adenosylmethioninamine from S-adenosyl-L-methionine: step 1/1. In terms of biological role, catalyzes the decarboxylation of S-adenosylmethionine to S-adenosylmethioninamine (dcAdoMet), the propylamine donor required for the synthesis of the polyamines spermine and spermidine from the diamine putrescine. This is S-adenosylmethionine decarboxylase proenzyme from Salmonella arizonae (strain ATCC BAA-731 / CDC346-86 / RSK2980).